Here is a 170-residue protein sequence, read N- to C-terminus: Adenine phosphoribosyltransferase (170 aa).

This sequence belongs to the purine/pyrimidine phosphoribosyltransferase family. In terms of assembly, homodimer.

It localises to the cytoplasm. It carries out the reaction AMP + diphosphate = 5-phospho-alpha-D-ribose 1-diphosphate + adenine. Its pathway is purine metabolism; AMP biosynthesis via salvage pathway; AMP from adenine: step 1/1. Catalyzes a salvage reaction resulting in the formation of AMP, that is energically less costly than de novo synthesis. The polypeptide is Adenine phosphoribosyltransferase (Mycoplasma mycoides subsp. mycoides SC (strain CCUG 32753 / NCTC 10114 / PG1)).